A 411-amino-acid polypeptide reads, in one-letter code: Protrudin (411 aa).

The interval 1–27 is disordered; it reads MQTSEREGSGPELSPSVMPEAPLESPP. Residues 1–66 lie on the Cytoplasmic side of the membrane; that stretch reads MQTSEREGSG…AGDGVRYLLR (66 aa). A sufficient for homooligomerization region spans residues 1–92; sequence MQTSEREGSG…LFLTLNEGAW (92 aa). The segment at 1-205 is sufficient for localization to endoplasmic reticulum tubular network and for interactions with REEP1, REEP5, ATL1, ATL2, ATL3 and SPAST; sequence MQTSEREGSG…LYLLPLCWVL (205 aa). Residues 51-64 are necessary for interaction with RAB11A and function in neurite outgrowth; it reads LEPLKDAGDGVRYL. Residues 67 to 87 traverse the membrane as a helical segment; that stretch reads WQMPLCSLLTCLGLNVLFLTL. Asparagine 88 is a topological domain (lumenal). The helical transmembrane segment at 89–109 threads the bilayer; the sequence is EGAWYSVGALMISVPALLGYL. Over 110–187 the chain is Cytoplasmic; sequence QEVCRARLPD…NPVVSSQFYG (78 aa). Residues 188–208 constitute an intramembrane region (helical); that stretch reads ALLGTVCMLYLLPLCWVLTLL. Residues 209–411 are Cytoplasmic-facing; it reads NSTLFLGNVE…CASCNQTLSK (203 aa). The tract at residues 234 to 286 is disordered; that stretch reads MNPKQEEHAFESPPPPDVGGKDGLMDSTPALTPTEDLTPGSVEEAEEAEPDEE. Residues 271 to 361 are necessary for interaction with KIF5A; it reads TPGSVEEAEE…GCSATFSVLK (91 aa). A compositionally biased stretch (acidic residues) spans 276–286; it reads EEAEEAEPDEE. The tract at residues 286–292 is necessary for interaction with VAPA and function in cell projections formation; that stretch reads EFKDAIE. Residues 344–410 form an FYVE-type zinc finger; the sequence is TNNFGNCTGC…VCASCNQTLS (67 aa). Zn(2+) is bound by residues cysteine 350, cysteine 353, cysteine 366, cysteine 369, cysteine 374, cysteine 377, cysteine 402, and cysteine 405.

Can form homooligomers (monomers, dimers and tetramers). Interacts with RAB11A (GDP-bound form); regulates RAB11A. Interacts with FKBP8; may negatively regulate ZFYVE27 phosphorylation. Interacts with VAPA (via MSP domain); may regulate ZFYVE27 retention in the endoplasmic reticulum and its function in cell projections formation. Interacts with VAPB (via MSP domain). Interacts with REEP1, REEP5 and ATL1. Interacts with ATL2, ATL3 and SPAST. Interacts with KIF5A and RTN3. Interacts with RAB11B (GDP-bound form), SURF4, KIF5B and KIF5C. Post-translationally, phosphorylated. Phosphorylation is induced by NGF through the MAPK/ERK pathway and modulates interaction with RAB11A.

It localises to the recycling endosome membrane. It is found in the endoplasmic reticulum membrane. The protein localises to the cell projection. Its subcellular location is the growth cone membrane. Its function is as follows. Key regulator of RAB11-dependent vesicular trafficking during neurite extension through polarized membrane transport. Promotes axonal elongation and contributes to the establishment of neuronal cell polarity. Involved in nerve growth factor-induced neurite formation in VAPA-dependent manner. Contributes to both the formation and stabilization of the tubular ER network. Involved in ER morphogenesis by regulating the sheet-to-tubule balance and possibly the density of tubule interconnections. Acts as an adapter protein and facilitates the interaction of KIF5A with VAPA, VAPB, SURF4, RAB11A, RAB11B and RTN3 and the ZFYVE27-KIF5A complex contributes to the transport of these proteins in neurons. Can induce formation of neurite-like membrane protrusions in non-neuronal cells in a KIF5A/B-dependent manner. The protein is Protrudin (ZFYVE27) of Homo sapiens (Human).